A 148-amino-acid chain; its full sequence is Macrodomain Ter protein (148 aa).

The protein belongs to the MatP family. As to quaternary structure, homodimer.

The protein localises to the cytoplasm. Its function is as follows. Required for spatial organization of the terminus region of the chromosome (Ter macrodomain) during the cell cycle. Prevents early segregation of duplicated Ter macrodomains during cell division. Binds specifically to matS, which is a 13 bp signature motif repeated within the Ter macrodomain. This chain is Macrodomain Ter protein, found in Pasteurella multocida (strain Pm70).